The chain runs to 292 residues: Probable alpha-L-glutamate ligase (292 aa).

One can recognise an ATP-grasp domain in the interval 104 to 287; sequence HQLLAAKGID…VATRIIEHVE (184 aa). Residues Lys-141, 178–179, Asp-187, and 211–213 contribute to the ATP site; these read EF and RSN. Mg(2+) is bound by residues Asp-248, Glu-260, and Asn-262. Residues Asp-248, Glu-260, and Asn-262 each coordinate Mn(2+).

Belongs to the RimK family. The cofactor is Mg(2+). Mn(2+) serves as cofactor.

This is Probable alpha-L-glutamate ligase from Stenotrophomonas maltophilia (strain K279a).